A 155-amino-acid chain; its full sequence is uncharacterized protein (155 aa).

The first 19 residues, M1–A19, serve as a signal peptide directing secretion.

This is an uncharacterized protein from Haemophilus influenzae (strain ATCC 51907 / DSM 11121 / KW20 / Rd).